The sequence spans 82 residues: Small, acid-soluble spore protein gamma-type (82 aa).

2 stretches are compositionally biased toward polar residues: residues 1–24 and 32–50; these read MANS…ASGQ and ASET…SAAG. Residues 1–82 form a disordered region; the sequence is MANSNNKTNA…SAEQNKQQNS (82 aa). 2 repeats span residues 19 to 45 and 46 to 72; these read QSAS…KQNQ and QSAA…QQNQ. A compositionally biased stretch (low complexity) spans 69 to 82; sequence QQNQSAEQNKQQNS.

Belongs to the gamma-type SASP family.

SASP are bound to spore DNA. They are double-stranded DNA-binding proteins that cause DNA to change to an a-like conformation. They protect the DNA backbone from chemical and enzymatic cleavage and are thus involved in dormant spore's high resistance to UV light. This chain is Small, acid-soluble spore protein gamma-type, found in Bacillus subtilis.